The sequence spans 238 residues: Orotidine 5'-phosphate decarboxylase (238 aa).

Residues aspartate 10, lysine 32, 59 to 68, threonine 122, arginine 184, glutamine 193, glycine 213, and arginine 214 each bind substrate; that span reads DLKLHDIPNT. The active-site Proton donor is the lysine 61.

The protein belongs to the OMP decarboxylase family. Type 1 subfamily. Homodimer.

It carries out the reaction orotidine 5'-phosphate + H(+) = UMP + CO2. It participates in pyrimidine metabolism; UMP biosynthesis via de novo pathway; UMP from orotate: step 2/2. In terms of biological role, catalyzes the decarboxylation of orotidine 5'-monophosphate (OMP) to uridine 5'-monophosphate (UMP). This is Orotidine 5'-phosphate decarboxylase from Bacillus cereus (strain AH187).